The following is a 154-amino-acid chain: Superoxide dismutase [Cu-Zn] (154 aa).

3 residues coordinate Cu cation: histidine 47, histidine 49, and histidine 64. The cysteines at positions 58 and 147 are disulfide-linked. Zn(2+) is bound by residues histidine 64, histidine 72, histidine 81, and aspartate 84. Histidine 121 provides a ligand contact to Cu cation. Arginine 144 serves as a coordination point for substrate.

Belongs to the Cu-Zn superoxide dismutase family. Homodimer. The cofactor is Cu cation. Zn(2+) is required as a cofactor.

It is found in the cytoplasm. It catalyses the reaction 2 superoxide + 2 H(+) = H2O2 + O2. Destroys radicals which are normally produced within the cells and which are toxic to biological systems. The protein is Superoxide dismutase [Cu-Zn] (SOD1) of Candida albicans (Yeast).